We begin with the raw amino-acid sequence, 392 residues long: MKFIDEALIRIEAGDGGNGCVSFRREKFIPKGGPDGGDGGDGGDVYLIADENLNTLIDYRFEKSFAAERGENGRSSDCTGRRGKDITLRVPVGTRAIDNDTKEVLGDLTKHGTKMLVAKGGYHGLGNARFKSSVNRAPRQKTNGTPGEKRDLQLELMLLADVGMLGLPNAGKSTFIRAVSAAKPKVADYPFTTLVPSLGVTRVDTSRSFVIADIPGLIEGASEGAGLGVRFLKHLERCHVLIHLVDIAPIDESDPADNIAIIEGELFQYSEKLANKPRWLVFNKIDILSDEEATARAKNIMQRLGGEDDYYLISAATGKNVDVLCRDIMDFIEENPRQEQEKIDAQEVKFKWDDYHQEQLSEQVFTEDDQEEDDWDDWSEDDEEGVEIIYKP.

Residues 1-159 enclose the Obg domain; sequence MKFIDEALIR…RDLQLELMLL (159 aa). In terms of domain architecture, OBG-type G spans 160-333; sequence ADVGMLGLPN…LCRDIMDFIE (174 aa). GTP is bound by residues 166-173, 191-195, 213-216, 283-286, and 314-316; these read GLPNAGKS, FTTLV, DIPG, NKID, and SAA. 2 residues coordinate Mg(2+): S173 and T193. Positions 361 to 392 are disordered; it reads SEQVFTEDDQEEDDWDDWSEDDEEGVEIIYKP. A compositionally biased stretch (acidic residues) spans 365–386; the sequence is FTEDDQEEDDWDDWSEDDEEGV.

Belongs to the TRAFAC class OBG-HflX-like GTPase superfamily. OBG GTPase family. As to quaternary structure, monomer. The cofactor is Mg(2+).

Its subcellular location is the cytoplasm. Its function is as follows. An essential GTPase which binds GTP, GDP and possibly (p)ppGpp with moderate affinity, with high nucleotide exchange rates and a fairly low GTP hydrolysis rate. Plays a role in control of the cell cycle, stress response, ribosome biogenesis and in those bacteria that undergo differentiation, in morphogenesis control. This is GTPase Obg from Histophilus somni (strain 2336) (Haemophilus somnus).